Reading from the N-terminus, the 307-residue chain is Serine/threonine-protein phosphatase PP2A-5 catalytic subunit (307 aa).

Mn(2+)-binding residues include Asp55, His57, Asp83, and Asn115. The Proton donor role is filled by His116. 2 residues coordinate Mn(2+): His165 and His239. At Leu307 the chain carries Leucine methyl ester.

Belongs to the PPP phosphatase family. PP-2A subfamily. PP2A consists of a common heterodimeric core enzyme, composed of a 36 kDa catalytic subunit (subunit C) and a 65 kDa constant regulatory subunit (subunit A), that associates with a variety of regulatory subunits such as subunits B (the R2/B/PR55/B55, R3/B''/PR72/PR130/PR59 and R5/B'/B56 families). Also interacts with CHIP and TAF12B. Interacts with B'THETA. Interacts with CLC-A, CLC-B, CLC-C and CLC-G. Requires Mn(2+) as cofactor. In terms of processing, reversibly methyl esterified on Leu-307 by leucine carboxyl methyltransferase 1 (LCMT1) and pectin methylesterase 1 (PME1). Carboxyl methylation influences the affinity of the catalytic subunit for the different regulatory subunits, thereby modulating the PP2A holoenzyme's substrate specificity, enzyme activity and cellular localization. Post-translationally, phosphorylation of either threonine (by autophosphorylation-activated protein kinase) or tyrosine results in inactivation of the phosphatase. Auto-dephosphorylation has been suggested as a mechanism for reactivation. Ubiquitinated. CHIP-mediated ubiquitination enhances phosphatase activity after an abiotic stress such as low temperature or darkness.

The protein resides in the cytoplasm. Its subcellular location is the cytosol. It is found in the peroxisome. The enzyme catalyses O-phospho-L-seryl-[protein] + H2O = L-seryl-[protein] + phosphate. It carries out the reaction O-phospho-L-threonyl-[protein] + H2O = L-threonyl-[protein] + phosphate. In terms of biological role, associates with the serine/threonine-protein phosphatase PP2A regulatory subunits A and B' to positively regulates beta-oxidation of fatty acids and protoauxins in peroxisomes by dephosphorylating peroxisomal beta-oxidation-related proteins. Involved in the positive regulation of salt stress responses. May function by increasing chloride channel activities on vacuolar membranes. The polypeptide is Serine/threonine-protein phosphatase PP2A-5 catalytic subunit (Arabidopsis thaliana (Mouse-ear cress)).